We begin with the raw amino-acid sequence, 452 residues long: MEKQYLTVTALTRYIKTKIEYDPHLQSVWLKGEISNFKNHSRGHMYFTLKDENARIAAVMFAGHNRNIKFRPENGMKVLVKGKISVYEASGSYQIYIQDMQPDGIGNLHLAYEQLKVRLEEEGLFSQVYKKTIPPYAKTIGVITSPTGAAIRDIITTIKRRYPIGNVIVFPVLVQGESAAPSIVQAIRTANEMEEIDVLIVGRGGGSIEELWAFNEEMVARAIFKSEIPIISAVGHETDFTVADFVADLRAPTPTAAAELAAPNIIELQEKVLQRTLRLQRAMRELVHKKEEKLQVLQKSYAFRYPRQVYEQKEEQLDRALEQLVLAKERYIDKKVNQLKQLSFYLEKHHPSQKIMQTKVAVETLQKQLQREMQTLLQTKEFAFVRAAQKLEALSPLKVMMRGYGLVYDEEKQVLKSVKDVSLGDAVSVQLQDGILDCSVSGIEERELNNGK.

Belongs to the XseA family. Heterooligomer composed of large and small subunits.

It is found in the cytoplasm. The enzyme catalyses Exonucleolytic cleavage in either 5'- to 3'- or 3'- to 5'-direction to yield nucleoside 5'-phosphates.. Functionally, bidirectionally degrades single-stranded DNA into large acid-insoluble oligonucleotides, which are then degraded further into small acid-soluble oligonucleotides. This Bacillus cereus (strain 03BB102) protein is Exodeoxyribonuclease 7 large subunit.